A 268-amino-acid chain; its full sequence is AN1-type zinc finger protein 1 (268 aa).

Residue A2 is modified to N-acetylalanine. 2 AN1-type zinc fingers span residues 4 to 52 (LDIG…VINE) and 58 to 106 (QHTS…IPKP). Zn(2+) contacts are provided by C10, C15, C25, C28, C33, H36, H42, C44, C64, C69, C79, C82, C87, H90, H96, and C98. The ubiquitin-like stretch occupies residues 160-260 (QTERIYFQVF…EYLNDEEQFC (101 aa)).

Associates with the 26S proteasome; this association occurs upon exposure to arsenite and is reduced in the presence of ATP. Interacts (via AN1-type 1 and 2 zinc fingers) with PSMD1; this interaction is increased upon arsenite treatment and occurs in an ATP-independent manner. Interacts with PSMC4. Interacts with PSMA1. Interacts (via its ubiquitin-like region) with VCP; this interaction occurs in an arsenite-dependent manner and is necessary for the recruitment of the ubiquitin-selective ATPase VCP to stress granules (SGs).

The protein resides in the cytoplasm. It is found in the stress granule. Its function is as follows. Plays a role in the regulation of cytoplasmic stress granules (SGs) turnover. SGs are dynamic and transient cytoplasmic ribonucleoprotein assemblies important for cellular protein homeostasis when protein production is suspended after acute exogenous stress. Associates with SGs and is involved in the efficient and specific arsenite-induced clearance process of SGs through the recruitment of the ubiquitin-selective ATPase VCP and the 26S proteasome. This process requires both complexes for efficient degradation of damaged ubiquitinated SG proteins during recovery from arsenite stress, and hence avoiding aberrant cytoplasmic SGs degradation via autophagy. The sequence is that of AN1-type zinc finger protein 1 from Homo sapiens (Human).